Consider the following 353-residue polypeptide: Photosystem II protein D1 (353 aa).

T2 carries the post-translational modification N-acetylthreonine. T2 is subject to Phosphothreonine. 3 helical membrane passes run 29 to 46 (YIGWFGVLMIPTLLTATS), 118 to 133 (HFLLGVACYMGREWEL), and 142 to 156 (WIAVAYSAPVAAATA). H118 is a binding site for chlorophyll a. Position 126 (Y126) interacts with pheophytin a. [CaMn4O5] cluster is bound by residues D170 and E189. Residues 197-218 (FHMLGVAGVFGGSLFSAMHGSL) traverse the membrane as a helical segment. Residue H198 coordinates chlorophyll a. Residues H215 and 264 to 265 (SF) contribute to the a quinone site. H215 contacts Fe cation. H272 contributes to the Fe cation binding site. Residues 274–288 (FLTAWPVVGIWFTAL) traverse the membrane as a helical segment. Residues H332, E333, D342, and A344 each contribute to the [CaMn4O5] cluster site. Positions 345-353 (AVEAPSTNG) are excised as a propeptide.

It belongs to the reaction center PufL/M/PsbA/D family. In terms of assembly, PSII is composed of 1 copy each of membrane proteins PsbA, PsbB, PsbC, PsbD, PsbE, PsbF, PsbH, PsbI, PsbJ, PsbK, PsbL, PsbM, PsbT, PsbX, PsbY, PsbZ, Psb30/Ycf12, at least 3 peripheral proteins of the oxygen-evolving complex and a large number of cofactors. It forms dimeric complexes. Requires The D1/D2 heterodimer binds P680, chlorophylls that are the primary electron donor of PSII, and subsequent electron acceptors. It shares a non-heme iron and each subunit binds pheophytin, quinone, additional chlorophylls, carotenoids and lipids. D1 provides most of the ligands for the Mn4-Ca-O5 cluster of the oxygen-evolving complex (OEC). There is also a Cl(-1) ion associated with D1 and D2, which is required for oxygen evolution. The PSII complex binds additional chlorophylls, carotenoids and specific lipids. as cofactor. In terms of processing, tyr-161 forms a radical intermediate that is referred to as redox-active TyrZ, YZ or Y-Z. Post-translationally, C-terminally processed by CTPA; processing is essential to allow assembly of the oxygen-evolving complex and thus photosynthetic growth.

It localises to the plastid. The protein localises to the chloroplast thylakoid membrane. It carries out the reaction 2 a plastoquinone + 4 hnu + 2 H2O = 2 a plastoquinol + O2. Its function is as follows. Photosystem II (PSII) is a light-driven water:plastoquinone oxidoreductase that uses light energy to abstract electrons from H(2)O, generating O(2) and a proton gradient subsequently used for ATP formation. It consists of a core antenna complex that captures photons, and an electron transfer chain that converts photonic excitation into a charge separation. The D1/D2 (PsbA/PsbD) reaction center heterodimer binds P680, the primary electron donor of PSII as well as several subsequent electron acceptors. The protein is Photosystem II protein D1 of Barbarea verna (Land cress).